The primary structure comprises 621 residues: Transmembrane protein 200C (621 aa).

The segment at 12–37 (ARKQDPLRPPSQIPKRKRKAKKRRKN) is disordered. Residues 25-36 (PKRKRKAKKRRK) are compositionally biased toward basic residues. The helical transmembrane segment at 53 to 73 (GLIALCGILVLLVGIAMAVVG) threads the bilayer. The segment at 80-147 (GTNREGGKQL…RAASPSSSST (68 aa)) is disordered. A compositionally biased stretch (low complexity) spans 125–147 (SSSAGAPRSTPPARAASPSSSST). The chain crosses the membrane as a helical span at residues 167-187 (VFGPLIMGIGIFLFICANAVL). Disordered regions lie at residues 284-315 (WPPHPAAPSGGRPRGAASPPDLASSPRCPREP), 347-368 (ASSCSSPAPCSPPESWGRQSTA), and 384-598 (LQGG…FTNK). Over residues 290 to 303 (APSGGRPRGAASPP) the composition is skewed to low complexity. Over residues 405 to 418 (PGERGSQEIPRGEL) the composition is skewed to basic and acidic residues. The span at 479-490 (RAPPSPEPPPSP) shows a compositional bias: pro residues. 2 stretches are compositionally biased toward low complexity: residues 491–505 (GSADPDSSPLAKAAS) and 523–533 (GSSQSDDPSSS). Over residues 586–595 (EQPQPVQRQF) the composition is skewed to polar residues.

Belongs to the TMEM200 family.

The protein resides in the membrane. The sequence is that of Transmembrane protein 200C (TMEM200C) from Homo sapiens (Human).